A 350-amino-acid polypeptide reads, in one-letter code: MHIYTYWGLKYVPSNSTMVAKEGDLILLGNEVHKVVKVLHRFRNITDLQITNWKGTETRYNLHVTEYKVLVPYDTHKEENEAMSDSLITHNGKDYVLCKIPARVGDLIRTEDKRVWEVLQKSKDGLVLYNEEKGEQRSAVYSEIGPYHVLVPRDTDTHTPTREELAAVIMNKAFTRTETQDSQEDTGTHKGLGLTGTDLYHSLRDLDAKVQSGYYTATENEEDVKSEIEATKKHMKAVKESGKTVNDYRKEENTKRCKLKALTNKFNRLFLKSVIDTDSLQVGKAYLIGGRDMKNVHGLYTGTTFDQQHANFLIVETDRMHRTLTVSAEQLFAEERHIVDIEKRVEQTED.

237-244 contributes to the ATP binding site; sequence AVKESGKT.

The sequence is that of Gene 40 protein (40) from Bacillus phage SP01 (Bacteriophage SP01).